Consider the following 339-residue polypeptide: 2-halobenzoate 1,2-dioxygenase electron transfer component (339 aa).

Positions H3–S96 constitute a 2Fe-2S ferredoxin-type domain. Residues C40, C45, C48, and C80 each coordinate [2Fe-2S] cluster. Residues A98 to T336 form a ferredoxin-reductase region. An FAD-binding FR-type domain is found at K103 to R203.

Belongs to the bacterial ring-hydroxylating dioxygenase ferredoxin reductase family. As to quaternary structure, monomer. It is part of 2-halobenzoate dioxygenase two component enzyme system. The other component is a dioxygenase component consisting of 3 large (CbdA) subunits and 3 small (CbdB) subunits. Requires FAD as cofactor. The cofactor is [2Fe-2S] cluster.

It catalyses the reaction 2 reduced [2Fe-2S]-[ferredoxin] + NAD(+) + H(+) = 2 oxidized [2Fe-2S]-[ferredoxin] + NADH. It functions in the pathway xenobiotic degradation; benzoate degradation via CoA ligation. Electron transfer component of 2-halobenzoate 1,2-dioxygenase system. This chain is 2-halobenzoate 1,2-dioxygenase electron transfer component (cbdC), found in Burkholderia cepacia (Pseudomonas cepacia).